The chain runs to 253 residues: Probable transcriptional regulatory protein Hore_12350 (253 aa).

The segment at 1-21 is disordered; sequence MAGHSKWANIKHKKAKEDRKR.

It belongs to the TACO1 family.

It is found in the cytoplasm. The protein is Probable transcriptional regulatory protein Hore_12350 of Halothermothrix orenii (strain H 168 / OCM 544 / DSM 9562).